Consider the following 167-residue polypeptide: Lipoprotein signal peptidase (167 aa).

A run of 2 helical transmembrane segments spans residues 56 to 76 and 84 to 104; these read FAPP…VLVF and TPIF…NMID. Residues aspartate 113 and aspartate 139 contribute to the active site. The helical transmembrane segment at 132-152 threads the bilayer; it reads WPIFNVADSAITIGACMLVLF.

It belongs to the peptidase A8 family.

The protein resides in the cell inner membrane. It catalyses the reaction Release of signal peptides from bacterial membrane prolipoproteins. Hydrolyzes -Xaa-Yaa-Zaa-|-(S,diacylglyceryl)Cys-, in which Xaa is hydrophobic (preferably Leu), and Yaa (Ala or Ser) and Zaa (Gly or Ala) have small, neutral side chains.. The protein operates within protein modification; lipoprotein biosynthesis (signal peptide cleavage). Its function is as follows. This protein specifically catalyzes the removal of signal peptides from prolipoproteins. This is Lipoprotein signal peptidase from Chlorobium luteolum (strain DSM 273 / BCRC 81028 / 2530) (Pelodictyon luteolum).